A 256-amino-acid chain; its full sequence is Thiazole synthase (256 aa).

Lys95 serves as the catalytic Schiff-base intermediate with DXP. Residues Gly156, 182–183 (AG), and 204–205 (NT) each bind 1-deoxy-D-xylulose 5-phosphate.

This sequence belongs to the ThiG family. In terms of assembly, homotetramer. Forms heterodimers with either ThiH or ThiS.

It localises to the cytoplasm. It catalyses the reaction [ThiS sulfur-carrier protein]-C-terminal-Gly-aminoethanethioate + 2-iminoacetate + 1-deoxy-D-xylulose 5-phosphate = [ThiS sulfur-carrier protein]-C-terminal Gly-Gly + 2-[(2R,5Z)-2-carboxy-4-methylthiazol-5(2H)-ylidene]ethyl phosphate + 2 H2O + H(+). Its pathway is cofactor biosynthesis; thiamine diphosphate biosynthesis. Functionally, catalyzes the rearrangement of 1-deoxy-D-xylulose 5-phosphate (DXP) to produce the thiazole phosphate moiety of thiamine. Sulfur is provided by the thiocarboxylate moiety of the carrier protein ThiS. In vitro, sulfur can be provided by H(2)S. The protein is Thiazole synthase of Escherichia fergusonii (strain ATCC 35469 / DSM 13698 / CCUG 18766 / IAM 14443 / JCM 21226 / LMG 7866 / NBRC 102419 / NCTC 12128 / CDC 0568-73).